A 300-amino-acid chain; its full sequence is Ribonuclease HIII (300 aa).

One can recognise an RNase H type-2 domain in the interval 83–300; the sequence is IPIIGSDEVG…THKAQALLTK (218 aa). A divalent metal cation contacts are provided by D89, E90, and D194.

It belongs to the RNase HII family. RnhC subfamily. The cofactor is Mn(2+). Mg(2+) serves as cofactor.

It localises to the cytoplasm. The catalysed reaction is Endonucleolytic cleavage to 5'-phosphomonoester.. Its function is as follows. Endonuclease that specifically degrades the RNA of RNA-DNA hybrids. The chain is Ribonuclease HIII from Streptococcus pyogenes serotype M5 (strain Manfredo).